A 755-amino-acid chain; its full sequence is Zinc transporter ZIP6 (755 aa).

A signal peptide spans 1 to 28 (MARKLSVILILTFALSVTNPLHELKAAA). Topologically, residues 29 to 325 (FPQTTEKISP…PKTYSLQIAW (297 aa)) are extracellular. N-linked (GlcNAc...) asparagine glycosylation is present at N67. Residues 95-128 (DHDHHSDHEHHSDHERHSDHEHHSEHEHHSDHDH) are compositionally biased toward basic and acidic residues. Disordered stretches follow at residues 95–186 (DHDH…SASE) and 202–246 (LETI…SVSE). Residues 129 to 144 (HSHHNHAASGKNKRKA) are compositionally biased toward basic residues. 2 stretches are compositionally biased toward basic and acidic residues: residues 145–159 (LCPD…KDPR) and 167–179 (HRPE…RNVK). The segment covering 219-234 (SSSTPPSVTSKSRVSR) has biased composition (low complexity). N241, N266, and N283 each carry an N-linked (GlcNAc...) asparagine glycan. Residues 326–346 (VGGFIAISIISFLSLLGVILV) form a helical membrane-spanning segment. Topologically, residues 347–355 (PLMNRVFFK) are cytoplasmic. The helical transmembrane segment at 356-376 (FLLSFLVALAVGTLSGDAFLH) threads the bilayer. Residues 377–423 (LLPHSHASHHHSHSHEEPAMEMKRGPLFSHLSSQNIEESAYFDSTWK) are Extracellular-facing. The helical transmembrane segment at 424–444 (GLTALGGLYFMFLVEHVLTLI) threads the bilayer. The Cytoplasmic segment spans residues 445–657 (KQFKDKKKKN…LKAGMTVKQA (213 aa)). A coiled-coil region spans residues 464–480 (VEIKKQLSKYESQLSTN). S471 and S478 each carry phosphoserine. Residues 658–678 (VLYNALSAMLAYLGMATGIFI) form a helical membrane-spanning segment. Residues 679–686 (GHYAENVS) are Extracellular-facing. N684 carries an N-linked (GlcNAc...) asparagine glycan. Residues 687 to 707 (MWIFALTAGLFMYVALVDMVP) traverse the membrane as a helical segment. The Cytoplasmic portion of the chain corresponds to 708 to 724 (EMLHNDASDHGCSRWGY). Residues 725 to 745 (FFLQNAGMLLGFGIMLLISIF) traverse the membrane as a helical segment. Over 746 to 755 (EHKIVFRINF) the chain is Extracellular.

It belongs to the ZIP transporter (TC 2.A.5) family. As to quaternary structure, interacts with SLC39A10; which triggers cells to undergo EMT and mitosis. Found in a complex with SLC39A6, SLC39A10 and with the 'Ser-727' phosphorylated form of STAT3 throughout mitosis. Found in a complex with SLC39A6, SLC39A10 and with NCAM1; this complex controls NCAM1 phosphorylation and integration into focal adhesion complexes during epithelial-to-mesenchymal transition (EMT). Found in a complex with SLC39A6, SLC39A10 and with GSK3B that controls NCAM1 phosphorylation. In terms of processing, cleaved on the N-terminus before locating to the plasma membrane. Post-translationally, N-glycosylated. Phosphorylated by ZAP70 in response to TCR stimulation leading to its activation. Highly expressed in the breast, prostate, placenta, kidney, pituitary and corpus callosum. Weakly expressed in heart and intestine. Also highly expressed in cells derived from an adenocarcinoma of the cervix and lung carcinoma.

The protein resides in the cell membrane. The protein localises to the cell projection. It localises to the lamellipodium membrane. It is found in the membrane raft. Its subcellular location is the apical cell membrane. It carries out the reaction Zn(2+)(in) = Zn(2+)(out). In terms of biological role, zinc-influx transporter which plays a role in zinc homeostasis and in the induction of epithelial-to-mesenchymal transition (EMT). When associated with SLC39A10, the heterodimer formed by SLC39A10 and SLC39A6 mediates cellular zinc uptake to trigger cells to undergo epithelial- to-mesenchymal transition (EMT). The SLC39A10-SLC39A6 heterodimer also controls NCAM1 phosphorylation and its integration into focal adhesion complexes during EMT. Zinc influx inactivates GSK3B, enabling unphosphorylated SNAI1 in the nucleus to down-regulate adherence genes such as CDH1, causing loss of cell adherence. In addition, the SLC39A10-SLC39A6 heterodimer plays an essentiel role in initiating mitosis by importing zinc into cells to initiate a pathway resulting in the onset of mitosis. Participates in the T-cell receptor signaling regulation by mediating cellular zinc uptake into activated lymphocytes. Regulates the zinc influx necessary for proper meiotic progression to metaphase II (MII) that allows the oocyte-to-egg transition. In Homo sapiens (Human), this protein is Zinc transporter ZIP6.